The sequence spans 128 residues: Translation initiation factor 5A (128 aa).

Hypusine is present on lysine 35.

This sequence belongs to the eIF-5A family.

Its subcellular location is the cytoplasm. Functionally, functions by promoting the formation of the first peptide bond. The chain is Translation initiation factor 5A (eif5a) from Methanosarcina mazei (strain ATCC BAA-159 / DSM 3647 / Goe1 / Go1 / JCM 11833 / OCM 88) (Methanosarcina frisia).